The chain runs to 282 residues: Putative SWIB domain-containing protein 070L (282 aa).

The span at 1 to 16 (MFQTTPKQVKPTTVPK) shows a compositional bias: low complexity. A disordered region spans residues 1-21 (MFQTTPKQVKPTTVPKTGRKN). Positions 97–181 (GLEKPRMISE…QKYLKHCFDE (85 aa)) constitute an SWIB/MDM2 domain. Positions 199–282 (TDDQTTAEEA…KVKKEHKIKK (84 aa)) are disordered. Residues 262-275 (GKKDKENIPLEKVK) are compositionally biased toward basic and acidic residues.

This sequence belongs to the IIV-6 306R family.

This is Putative SWIB domain-containing protein 070L from Invertebrate iridescent virus 3 (IIV-3).